We begin with the raw amino-acid sequence, 202 residues long: Zinc metalloproteinase barnettlysin-1 (202 aa).

The Peptidase M12B domain maps to Arg6–Asn200. Residues Glu9 and Asp93 each coordinate Ca(2+). Disulfide bonds link Cys117/Cys197, Cys157/Cys181, and Cys159/Cys164. His142 contributes to the Zn(2+) binding site. Glu143 is an active-site residue. 2 residues coordinate Zn(2+): His146 and His152. The Ca(2+) site is built by Cys197 and Asn200.

Monomer. Zn(2+) serves as cofactor. In terms of tissue distribution, expressed by the venom gland.

The protein localises to the secreted. Non-hemorrhagic metalloproteinase that hydrolyzes the alpha chains of fibrinogen and fibrin but has no activity on beta- and gamma-chains. Cleaves X-Leu bonds. Inhibits platelet aggregation induced by the von Willebrand factor (VWF) (IC(50) is 1.4 uM) and type I collagen (IC(50) is 3.2 uM). Acts by cleaving the vWF and its receptor GPIb, and by cleaving the collagen-binding Alpha-2A domain of the collagen receptor alpha-2/beta-1 integrin (ITGA2/ITGB1). Also degrades the extracellular matrix protein fibronectin (FN1), but has no effect on laminin and type I collagen. The chain is Zinc metalloproteinase barnettlysin-1 from Bothrops barnetti (Barnett's lancehead).